The chain runs to 65 residues: Large ribosomal subunit protein bL33c (65 aa).

It belongs to the bacterial ribosomal protein bL33 family.

It localises to the plastid. Its subcellular location is the chloroplast. In Psilotum nudum (Whisk fern), this protein is Large ribosomal subunit protein bL33c.